Reading from the N-terminus, the 350-residue chain is Ferrochelatase (350 aa).

Fe cation-binding residues include His-220 and Glu-301.

This sequence belongs to the ferrochelatase family.

The protein resides in the cytoplasm. The catalysed reaction is heme b + 2 H(+) = protoporphyrin IX + Fe(2+). It participates in porphyrin-containing compound metabolism; protoheme biosynthesis; protoheme from protoporphyrin-IX: step 1/1. Its function is as follows. Catalyzes the ferrous insertion into protoporphyrin IX. This is Ferrochelatase from Brucella anthropi (strain ATCC 49188 / DSM 6882 / CCUG 24695 / JCM 21032 / LMG 3331 / NBRC 15819 / NCTC 12168 / Alc 37) (Ochrobactrum anthropi).